The primary structure comprises 305 residues: ADP,ATP carrier protein (305 aa).

Solcar repeat units lie at residues 8-101, 112-204, and 212-298; these read SNFA…IKAM, KWFA…LKPL, and NSFL…LQVI. Transmembrane regions (helical) follow at residues 10 to 37, 78 to 102, 110 to 130, 180 to 201, and 215 to 235; these read FAID…VKLL, TANV…KAMF, YAKW…LSLL, FLPS…YDSL, and LASF…SYPL. Residues Arg83 and Lys95 each coordinate ADP. Position 239 (Arg239) interacts with ADP. The important for transport activity stretch occupies residues 239–244; that stretch reads RRRMMM. The short motif at 239-244 is the Nucleotide carrier signature motif element; it reads RRRMMM. A helical membrane pass occupies residues 275–295; it reads CGANILRGVAGAGVISMYDQL.

The protein belongs to the mitochondrial carrier (TC 2.A.29) family. As to quaternary structure, monomer.

The protein resides in the mitochondrion inner membrane. It catalyses the reaction ADP(in) + ATP(out) = ADP(out) + ATP(in). Its activity is regulated as follows. The matrix-open state (m-state) is inhibited by the membrane-permeable bongkrekic acid (BKA). The cytoplasmic-open state (c-state) is inhibited by the membrane-impermeable toxic inhibitor carboxyatractyloside (CATR). Functionally, ADP:ATP antiporter that mediates import of ADP into the mitochondrial matrix for ATP synthesis, and export of ATP out to fuel the cell. Cycles between the cytoplasmic-open state (c-state) and the matrix-open state (m-state): operates by the alternating access mechanism with a single substrate-binding site intermittently exposed to either the cytosolic (c-state) or matrix (m-state) side of the inner mitochondrial membrane. The protein is ADP,ATP carrier protein (AAC) of Kluyveromyces lactis (strain ATCC 8585 / CBS 2359 / DSM 70799 / NBRC 1267 / NRRL Y-1140 / WM37) (Yeast).